The chain runs to 425 residues: UDP-N-acetylglucosamine 1-carboxyvinyltransferase (425 aa).

22 to 23 (KN) contacts phosphoenolpyruvate. A UDP-N-acetyl-alpha-D-glucosamine-binding site is contributed by arginine 93. The active-site Proton donor is the cysteine 117. The residue at position 117 (cysteine 117) is a 2-(S-cysteinyl)pyruvic acid O-phosphothioketal. UDP-N-acetyl-alpha-D-glucosamine is bound by residues 122 to 126 (RPIDL), aspartate 307, and valine 329.

This sequence belongs to the EPSP synthase family. MurA subfamily.

It localises to the cytoplasm. It catalyses the reaction phosphoenolpyruvate + UDP-N-acetyl-alpha-D-glucosamine = UDP-N-acetyl-3-O-(1-carboxyvinyl)-alpha-D-glucosamine + phosphate. The protein operates within cell wall biogenesis; peptidoglycan biosynthesis. Cell wall formation. Adds enolpyruvyl to UDP-N-acetylglucosamine. This Prosthecochloris aestuarii (strain DSM 271 / SK 413) protein is UDP-N-acetylglucosamine 1-carboxyvinyltransferase.